The chain runs to 649 residues: Leucine-rich repeat transmembrane protein FLRT3 (649 aa).

An N-terminal signal peptide occupies residues Met1–Ala28. The LRRNT domain occupies Lys29 to Glu58. Topologically, residues Lys29–Pro528 are extracellular. 2 disulfides stabilise this stretch: Cys31–Cys37 and Cys35–Cys44. Residues Asp38–Asn67 form an interaction with ADGRL3 region. LRR repeat units lie at residues Asp59–Lys80, Lys84–Lys104, Tyr105–Lys126, Tyr129–Phe150, Tyr155–Arg175, Thr176–Gly197, Ser200–Val220, Asn226–Thr247, Asn248–Tyr269, and Gln272–Asp293. The N-linked (GlcNAc...) asparagine glycan is linked to Asn226. N-linked (GlcNAc...) asparagine glycosylation is found at Asn282 and Asn296. The region spanning Asn305–Asp357 is the LRRCT domain. Cysteines 309 and 334 form a disulfide. Residues Lys387–Ser407 are disordered. Positions Pro389–Gln401 are enriched in basic and acidic residues. In terms of domain architecture, Fibronectin type-III spans Lys409–Leu504. A helical membrane pass occupies residues Leu529 to Cys549. Over Trp550–Ser649 the chain is Cytoplasmic. Positions Leu622 to Ser649 are disordered.

In terms of assembly, monomer and homodimer. Self-associates (via leucine-rich repeats), giving rise to homooligomers. Interacts with FGFR1. Interacts (via extracellular domain) with ADGRL1/LPHN1 and LPHN2 (via olfactomedin-like domain). Interacts (via extracellular domain) with ADGRL3 (via olfactomedin-like domain); the interaction is direct. Interacts (via extracellular domain) with UNC5B and UNC5D (via extracellular domain); the interaction is direct. Identified in complexes composed of FLRT3, ADGRL3 and UNC5B, respectively FLRT3, ADGRL3 and UNC5D. May also interact (via extracellular domain) with UNC5A and UNC5C. Interacts (via cytoplasmic domain) with ROBO1. In terms of processing, N-glycosylated. Post-translationally, proteolytic cleavage in the juxtamembrane region gives rise to a soluble ectodomain. Cleavage is probably effected by a metalloprotease. Expressed in kidney, brain, pancreas, skeletal muscle, lung, liver, placenta, and heart.

The protein localises to the cell membrane. It is found in the presynaptic cell membrane. The protein resides in the endoplasmic reticulum membrane. Its subcellular location is the cell junction. It localises to the focal adhesion. The protein localises to the secreted. It is found in the cell projection. The protein resides in the axon. Its subcellular location is the growth cone membrane. Its function is as follows. Functions in cell-cell adhesion, cell migration and axon guidance, exerting an attractive or repulsive role depending on its interaction partners. Plays a role in the spatial organization of brain neurons. Plays a role in vascular development in the retina. Plays a role in cell-cell adhesion via its interaction with ADGRL3 and probably also other latrophilins that are expressed at the surface of adjacent cells. Interaction with the intracellular domain of ROBO1 mediates axon attraction towards cells expressing NTN1. Mediates axon growth cone collapse and plays a repulsive role in neuron guidance via its interaction with UNC5B, and possibly also other UNC-5 family members. Promotes neurite outgrowth (in vitro). Mediates cell-cell contacts that promote an increase both in neurite number and in neurite length. Plays a role in the regulation of the density of glutamaergic synapses. Plays a role in fibroblast growth factor-mediated signaling cascades. Required for normal morphogenesis during embryonic development, but not for normal embryonic patterning. Required for normal ventral closure, headfold fusion and definitive endoderm migration during embryonic development. Required for the formation of a normal basement membrane and the maintenance of a normal anterior visceral endoderm during embryonic development. This Homo sapiens (Human) protein is Leucine-rich repeat transmembrane protein FLRT3 (FLRT3).